Consider the following 516-residue polypeptide: Rho guanine nucleotide exchange factor 9 (516 aa).

Residues 8–67 form the SH3 domain; that stretch reads DSIVSAEAVWDHVTMANRELAFKAGDVIKVLDASNKDWWWGQIDDEEGWFPASFVRLWVN. Residues 100–110 form an interaction with GPHN region; sequence RDQMRANVINE. One can recognise a DH domain in the interval 103 to 287; sequence MRANVINEIM…RNVTQQINER (185 aa). Residues 318 to 425 enclose the PH domain; it reads ELIYTGEMAW…WLRAFREERK (108 aa). A disordered region spans residues 450 to 480; it reads RKASKQKGVNSARSVPPSYPPPQDPLNQGQY. A Phosphoserine modification is found at S502.

As to quaternary structure, interacts with GPHN. As to expression, detected in embryonic and adult brain.

Its subcellular location is the cytoplasm. The protein resides in the postsynaptic density. Acts as a guanine nucleotide exchange factor (GEF) for CDC42. Promotes formation of GPHN clusters. In Mus musculus (Mouse), this protein is Rho guanine nucleotide exchange factor 9 (Arhgef9).